The chain runs to 321 residues: Cytochrome f (321 aa).

An N-terminal signal peptide occupies residues 1-35 (MQNRNKNNWMKKWVIRSISILIILNIIAWPSISYA). Residues Tyr-36, Cys-56, Cys-59, and His-60 each contribute to the heme site. The helical transmembrane segment at 287-306 (IQGLLLFFVSVIMAQILLVL) threads the bilayer.

This sequence belongs to the cytochrome f family. In terms of assembly, the 4 large subunits of the cytochrome b6-f complex are cytochrome b6, subunit IV (17 kDa polypeptide, petD), cytochrome f and the Rieske protein, while the 4 small subunits are PetG, PetL, PetM and PetN. The complex functions as a dimer. Heme serves as cofactor.

The protein localises to the plastid. It localises to the chloroplast thylakoid membrane. Functionally, component of the cytochrome b6-f complex, which mediates electron transfer between photosystem II (PSII) and photosystem I (PSI), cyclic electron flow around PSI, and state transitions. The protein is Cytochrome f of Psilotum nudum (Whisk fern).